The following is a 402-amino-acid chain: Acetyl-CoA acetyltransferase (402 aa).

Catalysis depends on Cys-90, which acts as the Acyl-thioester intermediate. 2 residues coordinate CoA: Tyr-185 and Lys-230. Tyr-185 provides a ligand contact to K(+). Ala-250 contacts K(+). Ser-251 contacts CoA. Val-348 lines the K(+) pocket. Active-site proton acceptor residues include His-352 and Cys-382.

The protein belongs to the thiolase-like superfamily. Thiolase family. Homotetramer.

Its subcellular location is the cytoplasm. It is found in the cytosol. The catalysed reaction is 2 acetyl-CoA = acetoacetyl-CoA + CoA. The protein operates within metabolic intermediate biosynthesis; (R)-mevalonate biosynthesis; (R)-mevalonate from acetyl-CoA: step 1/3. Its function is as follows. Acetyl-CoA acetyltransferase; part of the first module of ergosterol biosynthesis pathway that includes the early steps of the pathway, conserved across all eukaryotes, and which results in the formation of mevalonate from acetyl-coenzyme A (acetyl-CoA). ERG10 catalyzes the formation of acetoacetyl-CoA from acetyl-CoA. The first module starts with the action of the cytosolic acetyl-CoA acetyltransferase ERG10 that catalyzes the formation of acetoacetyl-CoA. The hydroxymethylglutaryl-CoA synthase ERG13 then condenses acetyl-CoA with acetoacetyl-CoA to form HMG-CoA. The 3-hydroxy-3-methylglutaryl-coenzyme A (HMG-CoA) reductase HMG1 finally reduces HMG-CoA to produce mevalonate. The chain is Acetyl-CoA acetyltransferase from Candida albicans (strain SC5314 / ATCC MYA-2876) (Yeast).